A 293-amino-acid polypeptide reads, in one-letter code: Group 3 late-embryogenesis abundant protein, mitochondrial (293 aa).

The N-terminal 31 residues, 1–31, are a transit peptide targeting the mitochondrion; the sequence is MFLARNAGRAGYRGVVAYQQAASFSVSSAKA. A compositionally biased stretch (low complexity) spans 27-43; it reads SSAKAAGSRSSGGSDAG. Residues 27–52 are disordered; that stretch reads SSAKAAGSRSSGGSDAGDYAREAAEH. LEA 11-mer repeat repeat units follow at residues 58–68, 83–93, 123–133, 134–144, 145–155, 160–170, 171–181, 199–209, and 210–220; these read KDLKNEASWKA, KDTVKEGVHDM, KNAAQDTAATL, KDKAGSAWNQA, KHVVEDKGEDV, KDTASKVWGKA, KHVAEDVKENA, KDKAADVLSGA, and KHTAENLAHKA. The interval 217 to 293 is disordered; sequence AHKAQAAIHD…KGPGQAGGRR (77 aa). The span at 230-265 shows a compositional bias: low complexity; sequence SSGSQSQSQSQSQYRQGQQQGRQDQQQSKSQWGQTS. The span at 279–293 shows a compositional bias: gly residues; sequence GPQGGKGPGQAGGRR.

This sequence belongs to the LEA type 4 family.

The protein localises to the mitochondrion. Mitochondrial heat soluble protein acting as a molecular shield in water-deficient condition. This is Group 3 late-embryogenesis abundant protein, mitochondrial from Ramazzottius varieornatus (Water bear).